Consider the following 1114-residue polypeptide: Putative surface protein SAV2496/SAV2497 (1114 aa).

A signal peptide spans 1-50 (MRDKKGPVNKRVDFLSNKLNKYSIRKFTVGTASILIGSLMYLGTQQEAEA). 3 disordered regions span residues 76–116 (TNKD…EDTP), 440–473 (KFNPDLAPGTEKVTREGQKGEKTITTPTLKNPLT), and 496–1088 (EYGP…TGLE). 5 stretches are compositionally biased toward basic and acidic residues: residues 96 to 116 (DTIEHEASVKAEDISKKEDTP), 451 to 461 (KVTREGQKGEK), 505 to 523 (GHRDEFDPKLPTGEKEEVP), 554 to 570 (SIVEKEEIPFEKERKFN), and 579 to 589 (KVTREGQKGEK). Residues 419–501 (SAKNNNRIRK…NELTEYGPET (83 aa)) enclose the G5 1 domain. Residues 547–628 (YGPVKGDSIV…NELTEYGPET (82 aa)) form the G5 2 domain. Over residues 590-604 (TTTPTLKNPLTGEII) the composition is skewed to low complexity. Basic and acidic residues-rich tracts occupy residues 605-618 (SKGESKEEITKDPI), 632-650 (GHRDEFDPKLPTGEKEEVP), 681-697 (SIVEKEEIPFKKERKFN), 706-716 (KVTREGQKGEK), 733-746 (SKGESKEEITKDPI), 760-778 (GHRDEFDPKLPTGEKEEVP), 809-825 (SIVEKEEIPFEKERKFN), 834-844 (KVTREGQKGEK), 861-874 (SKGESKEEITKDPV), 918-929 (KVIEEPVDDVIK), and 946-965 (FETKREFNPKLQPGEERVKQ). One can recognise a G5 3 domain in the interval 674 to 756 (YGPVKGDSIV…NELTEYGPET (83 aa)). The G5 4 domain occupies 802–884 (YGPVKGDSIV…NELTEFGGEK (83 aa)). Positions 930–1012 (HGPKTGTPET…DKIVEFGGEK (83 aa)) constitute a G5 5 domain. Over residues 968–982 (QPGSKTITTPITVNP) the composition is skewed to polar residues. Positions 996 to 1026 (EITKQPVDKIVEFGGEKPKDPKGPENPEKPS) are enriched in basic and acidic residues. The LPXTG sorting signal signature appears at 1082-1086 (LPKTG). Position 1085 is a pentaglycyl murein peptidoglycan amidated threonine (Thr1085). Positions 1086-1114 (GLESTQKGLIFSSIIGIAGLMLLARRRKN) are cleaved as a propeptide — removed by sortase.

It is found in the secreted. The protein localises to the cell wall. This is Putative surface protein SAV2496/SAV2497 from Staphylococcus aureus (strain Mu50 / ATCC 700699).